Consider the following 139-residue polypeptide: uncharacterized protein (139 aa).

A helical transmembrane segment spans residues 22–38 (SVMSVCFMTMSATVLPI).

It localises to the membrane. This is an uncharacterized protein from Saccharomyces cerevisiae (strain ATCC 204508 / S288c) (Baker's yeast).